An 810-amino-acid chain; its full sequence is Transitional endoplasmic reticulum ATPase homolog 2 (810 aa).

ATP is bound by residues 252–258 (PGTGKTL), N353, H389, and 526–531 (GCGKTL). Over residues 713 to 727 (RQEKERQDRSARGEE) the composition is skewed to basic and acidic residues. 2 disordered regions span residues 713-732 (RQEK…MEDE) and 777-810 (FGNN…DLYN). Residues 793-802 (PVGGNGGSGG) show a composition bias toward gly residues. An interaction with ufd-2 region spans residues 805-810 (DDDLYN).

The protein belongs to the AAA ATPase family. CDC48 subfamily. Homohexamer; oligomerization is ATP-independent. Forms a ring-shaped particle of 18.3 nm diameter, that displays 6-fold radial symmetry. Interacts with cdc-48.1 and thus may form heterohexamers. Forms a complex composed of ubxn-3, cdc-48.1 and/or cdc-48.2 and substrate cdt-1. Interacts (via N-terminus) with ubxn-3. Interacts (via N-terminus) with atx-3 (via RRDR motif). Interacts (via N-terminus) with ubxn-5. Interacts with ufd-1. Interacts (via DDDLYN motif) with ufd-2. Interacts (via N-terminus) with ubxn-1. Interacts (via N-terminus) with ubxn-2. Interacts (via N-terminus) with ubxn-4. Interacts with ubxn-6. In terms of tissue distribution, expressed in body wall muscles.

The protein localises to the cytoplasm. It carries out the reaction ATP + H2O = ADP + phosphate + H(+). Its activity is regulated as follows. The first ATP-binding region has low ATPase activity. The second ATP-binding region is responsible for ATPase activity. ATP binding to the first ATP-binding region induces intrinsic activity of the second ATP-binding region. While ATP binding to the first ATP-binding region appears to prevent ATP hydrolysis by the second ATP-binding region, ADP-binding to first region promotes the coordinate and cooperative ATPase cycle of the second ATP-binding region. ATP binding to the first ATP-binding region induces a conformational change, promoting the rotation of the first ATP-binding region relative to the second ATP-binding region in the hexamer. Inhibited by N-ethylmaleimide (NEM). ATP-dependent chaperone which probably uses the energy provided by ATP hydrolysis to generate mechanical force to unfold substrate proteins, disassemble protein complexes, and disaggregate protein aggregates. However, able to prevent aggregation of unfolded proteins also in an ATP-independent manner. Targets polyubiquitinated proteins for proteasomal degradation by binding to 'Lys-48'-linked polyubiquitin chains. Involved in the cytoplasmic elimination of misfolded proteins exported from the ER. This pathway, known as ERAD, prevents the activation of the unfolded protein response (UPR) caused by the accumulation of misfolded proteins in the ER. Together with udf-2 and chn-1, regulates myosin assembly in body wall muscles by targeting myosin chaperone unc-45 for proteasomal degradation. During oocyte meiosis and together with cdc-48.1, required for chromosome condensation at the diakinesis phase in prophase I and for progression of metaphase I. During the first embryonic cell division, regulates DNA replication and thus chromosome segregation and decondensation, and nuclear envelope re-assembly. In S phase and in association with ufd-1, npl-4.1 and/or npl-4.2 and ubxn-3, ensures the degradation of DNA licensing factor cdt-1 after the initiation of DNA replication and thus the disassembly of the DNA replication CMG helicase complex by promoting the dissociation from chromatin of several of its components including cdc-45 and sld-5. Regulates ubxn-3 nuclear localization during S phase. During the first embryonic cell divisions and together with cdc-48.1, regulates the re-assembly of the nuclear envelope after mitosis possibly by inactivating kinase air-2, a component of the chromosomal passenger complex (CPC). This chain is Transitional endoplasmic reticulum ATPase homolog 2 (cdc-48.2), found in Caenorhabditis elegans.